A 394-amino-acid polypeptide reads, in one-letter code: Succinate--CoA ligase [ADP-forming] subunit beta 1 (394 aa).

Residues 9-237 (RDLFAKHDVP…KAAANPLEAA (229 aa)) form the ATP-grasp domain. ATP is bound by residues K45, 52-54 (GRG), E92, P95, and E100. Mg(2+) contacts are provided by N192 and D206. Residues N257 and 319–321 (GIT) contribute to the substrate site.

This sequence belongs to the succinate/malate CoA ligase beta subunit family. Heterotetramer of two alpha and two beta subunits. Mg(2+) is required as a cofactor.

It carries out the reaction succinate + ATP + CoA = succinyl-CoA + ADP + phosphate. The catalysed reaction is GTP + succinate + CoA = succinyl-CoA + GDP + phosphate. Its pathway is carbohydrate metabolism; tricarboxylic acid cycle; succinate from succinyl-CoA (ligase route): step 1/1. In terms of biological role, succinyl-CoA synthetase functions in the citric acid cycle (TCA), coupling the hydrolysis of succinyl-CoA to the synthesis of either ATP or GTP and thus represents the only step of substrate-level phosphorylation in the TCA. The beta subunit provides nucleotide specificity of the enzyme and binds the substrate succinate, while the binding sites for coenzyme A and phosphate are found in the alpha subunit. This Streptomyces coelicolor (strain ATCC BAA-471 / A3(2) / M145) protein is Succinate--CoA ligase [ADP-forming] subunit beta 1.